A 232-amino-acid polypeptide reads, in one-letter code: Large ribosomal subunit protein uL1 (232 aa).

Belongs to the universal ribosomal protein uL1 family. As to quaternary structure, part of the 50S ribosomal subunit.

Its function is as follows. Binds directly to 23S rRNA. The L1 stalk is quite mobile in the ribosome, and is involved in E site tRNA release. In terms of biological role, protein L1 is also a translational repressor protein, it controls the translation of the L11 operon by binding to its mRNA. This is Large ribosomal subunit protein uL1 from Methylorubrum populi (strain ATCC BAA-705 / NCIMB 13946 / BJ001) (Methylobacterium populi).